Here is a 497-residue protein sequence, read N- to C-terminus: Probable malate:quinone oxidoreductase (497 aa).

Belongs to the MQO family. Requires FAD as cofactor.

The enzyme catalyses (S)-malate + a quinone = a quinol + oxaloacetate. Its pathway is carbohydrate metabolism; tricarboxylic acid cycle; oxaloacetate from (S)-malate (quinone route): step 1/1. This chain is Probable malate:quinone oxidoreductase, found in Flavobacterium johnsoniae (strain ATCC 17061 / DSM 2064 / JCM 8514 / BCRC 14874 / CCUG 350202 / NBRC 14942 / NCIMB 11054 / UW101) (Cytophaga johnsonae).